Here is a 507-residue protein sequence, read N- to C-terminus: Maturase K (507 aa).

This sequence belongs to the intron maturase 2 family. MatK subfamily.

The protein localises to the plastid. Its subcellular location is the chloroplast. Its function is as follows. Usually encoded in the trnK tRNA gene intron. Probably assists in splicing its own and other chloroplast group II introns. This chain is Maturase K, found in Lyonia ferruginea (Rusty staggerbush).